Reading from the N-terminus, the 122-residue chain is NLLQFNRMIKLETKKNAVPFYAFYGCYCGWGGQGQPKDATDRCCFEHDCCYGKLTKCNTKSDLYSYSSKYGFLLCGKGTWCEEQICECDRIAATCLRRSLDTYKLKYMFYLDSYCKGPSEKC.

7 disulfide bridges follow: cysteine 26-cysteine 115, cysteine 28-cysteine 44, cysteine 43-cysteine 95, cysteine 49-cysteine 122, cysteine 50-cysteine 88, cysteine 57-cysteine 81, and cysteine 75-cysteine 86. The Ca(2+) site is built by tyrosine 27, glycine 29, and glycine 31. Histidine 47 is an active-site residue. Residue aspartate 48 coordinates Ca(2+). Residue aspartate 89 is part of the active site.

This sequence belongs to the phospholipase A2 family. Group II subfamily. D49 sub-subfamily. In terms of assembly, nigroviriditoxin is a heterodimer of an acidic subunit A and a basic subunit B. Requires Ca(2+) as cofactor. Expressed by the venom gland.

It localises to the secreted. It carries out the reaction a 1,2-diacyl-sn-glycero-3-phosphocholine + H2O = a 1-acyl-sn-glycero-3-phosphocholine + a fatty acid + H(+). In terms of biological role, heterodimer A-B: Nigroviriditoxin possesses phospholipase A2 (PLA2) activity. It consists of a non-covalent association of a basic PLA2 subunit B with a non-enzymatic subunit A. Subunit B: Snake venom phospholipase A2 (PLA2) that induces myonecrosis in mice. PLA2 catalyzes the calcium-dependent hydrolysis of the 2-acyl groups in 3-sn-phosphoglycerides. The polypeptide is Phospholipase A2 nigroviriditoxin basic subunit B (Bothriechis nigroviridis (Black-speckled palm pit viper)).